A 220-amino-acid polypeptide reads, in one-letter code: Polyadenylate-binding protein 2 (220 aa).

The segment at 1 to 24 (MEEEEHEVYGGEIPDVGEMDGDME) is disordered. Residues 34-74 (AADDDAVKELDEMKKRLKEMEDEAAALREMQAKVEKEMGAQ) are a coiled coil. The interval 78–219 (SIAANQAGKE…FRRPMRYMPY (142 aa)) is necessary for homooligomerization. One can recognise an RRM domain in the interval 92-168 (RSVFVGNVDY…RQLKVLQKRT (77 aa)). Positions 165–172 (QKRTNVPG) match the Nuclear localization signal motif.

In terms of assembly, monomer and homooligomer. Binds RNA as a monomer and oligomerizes when bound to poly(A). Forms a complex with cleavage and polyadenylation specificity factor (CPSF) subunits PAPS2, FIPS5, PABN3 and PABN1. Interacts with CSP3.

The protein resides in the nucleus speckle. The protein localises to the cytoplasm. Functionally, involved in the 3'-end formation of mRNA precursors (pre-mRNA) by the addition of a poly(A) tail of 200-250 nt to the upstream cleavage product. Stimulates poly(A) polymerase (PAPOLA) conferring processivity on the poly(A) tail elongation reaction and also controls the poly(A) tail length. Increases the affinity of poly(A) polymerase for RNA. Binds to poly(A) and to poly(G) with high affinity. May protect the poly(A) tail from degradation. In Arabidopsis thaliana (Mouse-ear cress), this protein is Polyadenylate-binding protein 2.